We begin with the raw amino-acid sequence, 326 residues long: MYGIEYTTTLTFLILLVLLNYILKSITRIMDYILYTFLLFIVIVTPFVNSQNYGINLPITGSMDTNYQNVSNPEPFLTSTLCLYYPVEAETEIADSSWKDTLSQLFLTKGWPTGSVYLKSYTDIATFSINPQLYCDYNIVLMKYNANSELDMSELADLILNEWLCNPMDIALYYYQQSSESKQWISMGDSCTDKVCPLNTQTLRIGCLTTDTTTFEEVATAEKLVITDVVDGVNYKINVTTTTCTIRNCKKLGPRENVAVIQVGGSFILDITADPTTAPQTERMMRINWKKWWQVFYTVVDYVNQIIQTMSKRSRSLDSASFYYRI.

Residues 1-50 form the signal peptide; it reads MYGIEYTTTLTFLILLVLLNYILKSITRIMDYILYTFLLFIVIVTPFVNS. N69 carries N-linked (GlcNAc...) asparagine; by host glycosylation. Cystine bridges form between C82-C135, C165-C249, C191-C244, and C196-C207. D95 is a binding site for Ca(2+). The segment at 165-167 is CNP motif; interaction with ITGAV/ITGB3; the sequence is CNP. Ca(2+) is bound by residues Q177, G206, T214, E216, D228, V229, and D231. Residue N238 is glycosylated (N-linked (GlcNAc...) asparagine; by host). Residues 253-255 are GPR motif; interaction with ITGAX/ITGB2; the sequence is GPR. A Ca(2+)-binding site is contributed by D301.

It belongs to the rotavirus VP7 family. As to quaternary structure, homotrimer; disulfide-linked. 2 Ca(2+) ions bound at each subunit interface in the trimer hold the trimer together. Interacts with the intermediate capsid protein VP6. Interacts with the outer capsid protein VP5*. In terms of processing, N-glycosylated. The N-terminus is blocked possibly by pyroglutamic acid.

It is found in the virion. It localises to the host endoplasmic reticulum lumen. In terms of biological role, calcium-binding protein that interacts with rotavirus cell receptors once the initial attachment by VP4 has been achieved. Rotavirus attachment and entry into the host cell probably involves multiple sequential contacts between the outer capsid proteins VP4 and VP7, and the cell receptors. Following entry into the host cell, low intracellular or intravesicular Ca(2+) concentration probably causes the calcium-stabilized VP7 trimers to dissociate from the virion. This step is probably necessary for the membrane-disrupting entry step and the release of VP4, which is locked onto the virion by VP7. The chain is Outer capsid glycoprotein VP7 from Rotavirus A (strain RVA/Human/Indonesia/B37/XXXX/G8P[X]) (RV-A).